We begin with the raw amino-acid sequence, 318 residues long: Ribosomal RNA small subunit methyltransferase H (318 aa).

Residues 42-44 (GGH), D62, F86, D108, and Q115 each bind S-adenosyl-L-methionine.

The protein belongs to the methyltransferase superfamily. RsmH family.

The protein resides in the cytoplasm. It carries out the reaction cytidine(1402) in 16S rRNA + S-adenosyl-L-methionine = N(4)-methylcytidine(1402) in 16S rRNA + S-adenosyl-L-homocysteine + H(+). Functionally, specifically methylates the N4 position of cytidine in position 1402 (C1402) of 16S rRNA. This Yersinia pestis (strain Pestoides F) protein is Ribosomal RNA small subunit methyltransferase H.